The following is a 424-amino-acid chain: Serine hydroxymethyltransferase 2 (424 aa).

Residues leucine 125 and 129 to 131 contribute to the (6S)-5,6,7,8-tetrahydrofolate site; that span reads GHL. Lysine 234 bears the N6-(pyridoxal phosphate)lysine mark. Glutamate 250 is a binding site for (6S)-5,6,7,8-tetrahydrofolate.

This sequence belongs to the SHMT family. Homodimer. It depends on pyridoxal 5'-phosphate as a cofactor.

The protein resides in the cytoplasm. It catalyses the reaction (6R)-5,10-methylene-5,6,7,8-tetrahydrofolate + glycine + H2O = (6S)-5,6,7,8-tetrahydrofolate + L-serine. It participates in one-carbon metabolism; tetrahydrofolate interconversion. It functions in the pathway amino-acid biosynthesis; glycine biosynthesis; glycine from L-serine: step 1/1. Catalyzes the reversible interconversion of serine and glycine with tetrahydrofolate (THF) serving as the one-carbon carrier. This reaction serves as the major source of one-carbon groups required for the biosynthesis of purines, thymidylate, methionine, and other important biomolecules. Also exhibits THF-independent aldolase activity toward beta-hydroxyamino acids, producing glycine and aldehydes, via a retro-aldol mechanism. This chain is Serine hydroxymethyltransferase 2, found in Burkholderia pseudomallei (strain 1710b).